Consider the following 540-residue polypeptide: CTP synthase (540 aa).

The tract at residues 1–264 (MQYIVVTGGV…ISYLSKLSGK (264 aa)) is amidoligase domain. Residue Ser12 coordinates CTP. Position 12 (Ser12) interacts with UTP. An ATP-binding site is contributed by 13-18 (GLGKGT). Tyr53 is an L-glutamine binding site. Asp70 provides a ligand contact to ATP. 2 residues coordinate Mg(2+): Asp70 and Glu140. Residues 147-149 (DIE), 185-190 (KTKPTQ), and Arg221 each bind CTP. UTP-binding positions include 185–190 (KTKPTQ) and Arg221. The Glutamine amidotransferase type-1 domain maps to 294 to 527 (YVDLHDAYIS…VQQALIYKKN (234 aa)). Gly347 lines the L-glutamine pocket. Cys374 (nucleophile; for glutamine hydrolysis) is an active-site residue. Residues 375-378 (LGFQ), Glu398, and Arg455 contribute to the L-glutamine site. Catalysis depends on residues His500 and Glu502.

This sequence belongs to the CTP synthase family. Homotetramer.

It catalyses the reaction UTP + L-glutamine + ATP + H2O = CTP + L-glutamate + ADP + phosphate + 2 H(+). It carries out the reaction L-glutamine + H2O = L-glutamate + NH4(+). The catalysed reaction is UTP + NH4(+) + ATP = CTP + ADP + phosphate + 2 H(+). It functions in the pathway pyrimidine metabolism; CTP biosynthesis via de novo pathway; CTP from UDP: step 2/2. Allosterically activated by GTP, when glutamine is the substrate; GTP has no effect on the reaction when ammonia is the substrate. The allosteric effector GTP functions by stabilizing the protein conformation that binds the tetrahedral intermediate(s) formed during glutamine hydrolysis. Inhibited by the product CTP, via allosteric rather than competitive inhibition. Its function is as follows. Catalyzes the ATP-dependent amination of UTP to CTP with either L-glutamine or ammonia as the source of nitrogen. Regulates intracellular CTP levels through interactions with the four ribonucleotide triphosphates. This chain is CTP synthase, found in Thermoplasma volcanium (strain ATCC 51530 / DSM 4299 / JCM 9571 / NBRC 15438 / GSS1).